The following is a 233-amino-acid chain: Pre-hexon-linking protein VIII (233 aa).

Thr-64 carries the phosphothreonine; by host modification. The propeptide occupies 112-163; it reads ARHVRFRDRPSPYSSGSIKRLIIRGRGIQLNDEVVSSSTGPRPDGVFQLGGA. At Ser-180 the chain carries Phosphoserine; by host.

Belongs to the adenoviridae hexon-linking protein family. Interacts with the peripentonal hexons as well as the hexons in the facets. Part of a complex composed of the core-capsid bridging protein, the endosome lysis protein VI and the hexon-linking protein VIII; these interactions bridge the virus core to the capsid. Post-translationally, cleaved by the viral protease during virion maturation. May cause the middle segment to be shed from the capsid.

It is found in the virion. It localises to the host nucleus. In terms of biological role, structural component of the virion that acts as a cement protein on the capsid interior and which glue the peripentonal hexons and group-of-nine hexons together. This Homo sapiens (Human) protein is Pre-hexon-linking protein VIII.